The primary structure comprises 279 residues: MGEPTWEAAEDPDRTLRERLRRGRTLLVSPHPDDVAYSCGGLLAAVGRPAHATLLTVFTRSAWALPRRLRRAGARVVSERRREEELRYCRLRGLAEYRPLGFADAGLRGYDDETELSSPAEADGVRGAVEEAVAEAIRDAGADTVLAPAAVGGHVDHLLVHGAVRGAVGPGGPLTLFYEDLPYAGQRDAVDVERTLREARGLVPFASVDISGVVQQKVRGMYVYGSQTDDECVRETLRHARRGAPRRWTGGTAGAGHAAGRRGAPHTERVWTPAPAGAR.

Zn(2+) is bound by residues histidine 31, aspartate 34, and histidine 157. Residues 245 to 279 (PRRWTGGTAGAGHAAGRRGAPHTERVWTPAPAGAR) are disordered. The span at 246-258 (RRWTGGTAGAGHA) shows a compositional bias: low complexity.

The protein belongs to the PIGL family. It depends on Zn(2+) as a cofactor.

It catalyses the reaction 2'-N-acetylparomamine + H2O = paromamine + acetate. The catalysed reaction is 2'''-acetyl-6'''-hydroxyneomycin C + H2O = 6'''-deamino-6'''-hydroxyneomycin C + acetate. The protein operates within antibiotic biosynthesis; neomycin biosynthesis. Functionally, deacetylase involved in the biosynthesis of neomycin by mediating 2 steps of the pathway. Deacetylates both 2'-N-acetylparomamine and 2'''-acetyl-6'''-hydroxyneomycin C. This is 2'-N-acetylparomamine deacetylase (neoL) from Streptomyces fradiae (Streptomyces roseoflavus).